We begin with the raw amino-acid sequence, 355 residues long: Methionine import ATP-binding protein MetN (355 aa).

The region spanning 8-250 (LKNIDITFTQ…PQEDLTQEFI (243 aa)) is the ABC transporter domain. ATP is bound at residue 42–49 (GYSGAGKS).

This sequence belongs to the ABC transporter superfamily. Methionine importer (TC 3.A.1.24) family. In terms of assembly, the complex is composed of two ATP-binding proteins (MetN), two transmembrane proteins (MetI) and a solute-binding protein (MetQ).

The protein localises to the cell membrane. The enzyme catalyses L-methionine(out) + ATP + H2O = L-methionine(in) + ADP + phosphate + H(+). It catalyses the reaction D-methionine(out) + ATP + H2O = D-methionine(in) + ADP + phosphate + H(+). In terms of biological role, part of the ABC transporter complex MetNIQ involved in methionine import. Responsible for energy coupling to the transport system. The polypeptide is Methionine import ATP-binding protein MetN (Streptococcus thermophilus (strain CNRZ 1066)).